Reading from the N-terminus, the 85-residue chain is Large ribosomal subunit protein bL31B (85 aa).

It belongs to the bacterial ribosomal protein bL31 family. Type B subfamily. Part of the 50S ribosomal subunit.

The polypeptide is Large ribosomal subunit protein bL31B (Aliivibrio salmonicida (strain LFI1238) (Vibrio salmonicida (strain LFI1238))).